Reading from the N-terminus, the 833-residue chain is CUB domain-containing protein 1 (833 aa).

An N-terminal signal peptide occupies residues 1–29 (MAHSACGFSVALLGALLLGTARLLRGTEA). The Extracellular segment spans residues 30–666 (SEIALPQRSG…VTLTPRTVDL (637 aa)). Asn122, Asn180, Asn205, Asn270, Asn310, Asn342, and Asn386 each carry an N-linked (GlcNAc...) asparagine glycan. The CUB domain occupies 417–540 (CLDHRYCYRQ…QGLIVSYTPY (124 aa)). A disulfide bridge connects residues Cys476 and Cys499. A helical transmembrane segment spans residues 667-687 (AVVIGAAGGGALLLFALVLII). The Cytoplasmic segment spans residues 688–833 (CFVKKKKKVD…HTQGPVETEE (146 aa)). Phosphotyrosine is present on Tyr731. Positions 783–833 (AKFTAEELAPSSPPESESEPYTFSHPNKGEIGVRETDIPLLHTQGPVETEE) are disordered. Over residues 809–819 (NKGEIGVRETD) the composition is skewed to basic and acidic residues.

In terms of assembly, interacts with CDH2/N-cadherin, CDH3/P-cadherin, SDC1/syndecan-1, SDC4/syndecan-4 and the serine protease ST14/MT-SP1. Also interacts SRC and PRKCG/protein kinase C gamma. In terms of processing, phosphorylated on tyrosine by kinases of the SRC family such as SRC and YES as well as by the protein kinase C gamma/PRKCG. Dephosphorylated by phosphotyrosine phosphatases. Also phosphorylated by suramin, a heparin analog. Tyrosine phosphorylated in response to dissociation of integrin alpha-6 beta-4 from laminin-5. N-glycosylated. Post-translationally, a soluble form may also be produced by proteolytic cleavage at the cell surface (shedding). Another peptide of 80 kDa (p80) is present in cultured keratinocytes probably due to tryptic cleavage at an unidentified site on the N-terminal side. Converted to p80 by plasmin, a trypsin-like protease.

Its subcellular location is the cell membrane. May be involved in cell adhesion and cell matrix association. May play a role in the regulation of anchorage versus migration or proliferation versus differentiation via its phosphorylation. May be a novel marker for leukemia diagnosis and for immature hematopoietic stem cell subsets. Belongs to the tetraspanin web involved in tumor progression and metastasis. The sequence is that of CUB domain-containing protein 1 (Cdcp1) from Mus musculus (Mouse).